The primary structure comprises 204 residues: Ribosomal RNA small subunit methyltransferase J (204 aa).

Residues Arg-55–Asp-56, Glu-71–Arg-72, and Asp-123 each bind S-adenosyl-L-methionine.

The protein belongs to the methyltransferase superfamily. RsmJ family.

It localises to the cytoplasm. The enzyme catalyses guanosine(1516) in 16S rRNA + S-adenosyl-L-methionine = N(2)-methylguanosine(1516) in 16S rRNA + S-adenosyl-L-homocysteine + H(+). Specifically methylates the guanosine in position 1516 of 16S rRNA. This is Ribosomal RNA small subunit methyltransferase J from Rhodopseudomonas palustris (strain TIE-1).